The chain runs to 468 residues: ATP synthase subunit beta (468 aa).

148–155 is an ATP binding site; that stretch reads GGAGVGKT.

This sequence belongs to the ATPase alpha/beta chains family. As to quaternary structure, F-type ATPases have 2 components, CF(1) - the catalytic core - and CF(0) - the membrane proton channel. CF(1) has five subunits: alpha(3), beta(3), gamma(1), delta(1), epsilon(1). CF(0) has three main subunits: a(1), b(2) and c(9-12). The alpha and beta chains form an alternating ring which encloses part of the gamma chain. CF(1) is attached to CF(0) by a central stalk formed by the gamma and epsilon chains, while a peripheral stalk is formed by the delta and b chains.

The protein localises to the cell inner membrane. It carries out the reaction ATP + H2O + 4 H(+)(in) = ADP + phosphate + 5 H(+)(out). Functionally, produces ATP from ADP in the presence of a proton gradient across the membrane. The catalytic sites are hosted primarily by the beta subunits. The polypeptide is ATP synthase subunit beta (Xanthomonas euvesicatoria pv. vesicatoria (strain 85-10) (Xanthomonas campestris pv. vesicatoria)).